The sequence spans 694 residues: Elongation factor G (694 aa).

One can recognise a tr-type G domain in the interval 8–283 (ERYRNIGIMA…AVIDYLPAPV (276 aa)). GTP contacts are provided by residues 17–24 (AHIDAGKT), 81–85 (DTPGH), and 135–138 (NKMD).

Belongs to the TRAFAC class translation factor GTPase superfamily. Classic translation factor GTPase family. EF-G/EF-2 subfamily.

It is found in the cytoplasm. Catalyzes the GTP-dependent ribosomal translocation step during translation elongation. During this step, the ribosome changes from the pre-translocational (PRE) to the post-translocational (POST) state as the newly formed A-site-bound peptidyl-tRNA and P-site-bound deacylated tRNA move to the P and E sites, respectively. Catalyzes the coordinated movement of the two tRNA molecules, the mRNA and conformational changes in the ribosome. The sequence is that of Elongation factor G from Paramagnetospirillum magneticum (strain ATCC 700264 / AMB-1) (Magnetospirillum magneticum).